The chain runs to 434 residues: 3-phosphoshikimate 1-carboxyvinyltransferase (434 aa).

Residues lysine 22, serine 23, and arginine 27 each contribute to the 3-phosphoshikimate site. Phosphoenolpyruvate is bound at residue lysine 22. 2 residues coordinate phosphoenolpyruvate: glycine 93 and arginine 121. Residues serine 168, serine 169, glutamine 170, serine 199, aspartate 320, and lysine 347 each contribute to the 3-phosphoshikimate site. Glutamine 170 provides a ligand contact to phosphoenolpyruvate. Residue aspartate 320 is the Proton acceptor of the active site. Phosphoenolpyruvate contacts are provided by arginine 351, arginine 394, and lysine 419.

It belongs to the EPSP synthase family. Monomer.

It localises to the cytoplasm. It carries out the reaction 3-phosphoshikimate + phosphoenolpyruvate = 5-O-(1-carboxyvinyl)-3-phosphoshikimate + phosphate. Its pathway is metabolic intermediate biosynthesis; chorismate biosynthesis; chorismate from D-erythrose 4-phosphate and phosphoenolpyruvate: step 6/7. Functionally, catalyzes the transfer of the enolpyruvyl moiety of phosphoenolpyruvate (PEP) to the 5-hydroxyl of shikimate-3-phosphate (S3P) to produce enolpyruvyl shikimate-3-phosphate and inorganic phosphate. This chain is 3-phosphoshikimate 1-carboxyvinyltransferase, found in Paraburkholderia phytofirmans (strain DSM 17436 / LMG 22146 / PsJN) (Burkholderia phytofirmans).